The chain runs to 447 residues: Tubulin beta chain (447 aa).

Residues Gln11, Glu69, Ser138, Gly142, Thr143, Gly144, Asn204, and Asn226 each coordinate GTP. Position 69 (Glu69) interacts with Mg(2+). Positions 425–447 (YQEASISEGEEEYDEEAPLEAEE) are disordered. Acidic residues predominate over residues 432 to 447 (EGEEEYDEEAPLEAEE).

Belongs to the tubulin family. Dimer of alpha and beta chains. A typical microtubule is a hollow water-filled tube with an outer diameter of 25 nm and an inner diameter of 15 nM. Alpha-beta heterodimers associate head-to-tail to form protofilaments running lengthwise along the microtubule wall with the beta-tubulin subunit facing the microtubule plus end conferring a structural polarity. Microtubules usually have 13 protofilaments but different protofilament numbers can be found in some organisms and specialized cells. It depends on Mg(2+) as a cofactor.

Its subcellular location is the cytoplasm. It localises to the cytoskeleton. Tubulin is the major constituent of microtubules, a cylinder consisting of laterally associated linear protofilaments composed of alpha- and beta-tubulin heterodimers. Microtubules grow by the addition of GTP-tubulin dimers to the microtubule end, where a stabilizing cap forms. Below the cap, tubulin dimers are in GDP-bound state, owing to GTPase activity of alpha-tubulin. This chain is Tubulin beta chain (tubB), found in Phaeosphaeria nodorum (strain SN15 / ATCC MYA-4574 / FGSC 10173) (Glume blotch fungus).